The following is a 326-amino-acid chain: Nitrogen metabolite regulation-like protein bik4 (326 aa).

NADP(+) contacts are provided by residues 13 to 18 (GATGEV) and 161 to 164 (FASN).

The protein belongs to the NmrA-type oxidoreductase family.

In terms of biological role, nitrogen metabolite regulation-like protein involved in the regulation of the gene cluster that mediates the biosynthesis of bikaverin, a red pigment also considered as a mycotoxin. This is Nitrogen metabolite regulation-like protein bik4 from Gibberella fujikuroi (strain CBS 195.34 / IMI 58289 / NRRL A-6831) (Bakanae and foot rot disease fungus).